The primary structure comprises 355 residues: Peptide chain release factor 1 (355 aa).

N5-methylglutamine is present on Q233. A disordered region spans residues 280-310; sequence ERRKKEQKRANNRRGQVGSGDRSERIRTYNF.

Belongs to the prokaryotic/mitochondrial release factor family. In terms of processing, methylated by PrmC. Methylation increases the termination efficiency of RF1.

The protein localises to the cytoplasm. Peptide chain release factor 1 directs the termination of translation in response to the peptide chain termination codons UAG and UAA. The polypeptide is Peptide chain release factor 1 (Rickettsia canadensis (strain McKiel)).